Here is a 67-residue protein sequence, read N- to C-terminus: Guanine nucleotide-binding protein G(I)/G(S)/G(O) subunit gamma-13 (67 aa).

C64 is subject to Cysteine methyl ester. The S-farnesyl cysteine moiety is linked to residue C64. Positions 65–67 are cleaved as a propeptide — removed in mature form; sequence TIL.

Belongs to the G protein gamma family. In terms of assembly, g proteins are composed of 3 units, alpha, beta and gamma.

The protein resides in the cell membrane. In terms of biological role, guanine nucleotide-binding proteins (G proteins) are involved as a modulator or transducer in various transmembrane signaling systems. The beta and gamma chains are required for the GTPase activity, for replacement of GDP by GTP, and for G protein-effector interaction. This Mus musculus (Mouse) protein is Guanine nucleotide-binding protein G(I)/G(S)/G(O) subunit gamma-13 (Gng13).